The chain runs to 207 residues: Holliday junction branch migration complex subunit RuvA (207 aa).

A domain I region spans residues 1–64 (MIGRLRGNLL…EDAQLLYGFN (64 aa)). The interval 65 to 143 (TKNERALFRE…GWGAGDLFTP (79 aa)) is domain II. Residues 144 to 158 (ATDAAPMDDGSEFIT) are flexible linker. The interval 159 to 207 (SPQSAVDEAVSALIALGYKPQQASKTVSQVAKPDMTSEVLIRESLKSMI) is domain III.

This sequence belongs to the RuvA family. As to quaternary structure, homotetramer. Forms an RuvA(8)-RuvB(12)-Holliday junction (HJ) complex. HJ DNA is sandwiched between 2 RuvA tetramers; dsDNA enters through RuvA and exits via RuvB. An RuvB hexamer assembles on each DNA strand where it exits the tetramer. Each RuvB hexamer is contacted by two RuvA subunits (via domain III) on 2 adjacent RuvB subunits; this complex drives branch migration. In the full resolvosome a probable DNA-RuvA(4)-RuvB(12)-RuvC(2) complex forms which resolves the HJ.

It is found in the cytoplasm. The RuvA-RuvB-RuvC complex processes Holliday junction (HJ) DNA during genetic recombination and DNA repair, while the RuvA-RuvB complex plays an important role in the rescue of blocked DNA replication forks via replication fork reversal (RFR). RuvA specifically binds to HJ cruciform DNA, conferring on it an open structure. The RuvB hexamer acts as an ATP-dependent pump, pulling dsDNA into and through the RuvAB complex. HJ branch migration allows RuvC to scan DNA until it finds its consensus sequence, where it cleaves and resolves the cruciform DNA. This Aliivibrio fischeri (strain MJ11) (Vibrio fischeri) protein is Holliday junction branch migration complex subunit RuvA.